Consider the following 320-residue polypeptide: Aurora kinase B (320 aa).

A compositionally biased stretch (basic and acidic residues) spans 1-10 (MQNKENREPR). The tract at residues 1-38 (MQNKENREPRVQQTPSAGVGPLRVEMNPDTHAVSGPGR) is disordered. The Protein kinase domain maps to 53–303 (FDIGRPLGKG…LRSVMEHPWV (251 aa)). ATP contacts are provided by residues 59–67 (LGKGKFGNV) and Lys-82. Asp-176 functions as the Proton acceptor in the catalytic mechanism.

This sequence belongs to the protein kinase superfamily. Ser/Thr protein kinase family. Aurora subfamily. Component of the chromosomal passenger complex (CPC).

The protein localises to the nucleus. The protein resides in the chromosome. Its subcellular location is the centromere. It localises to the cytoplasm. It is found in the cytoskeleton. The protein localises to the spindle. The protein resides in the midbody. The catalysed reaction is L-seryl-[protein] + ATP = O-phospho-L-seryl-[protein] + ADP + H(+). It catalyses the reaction L-threonyl-[protein] + ATP = O-phospho-L-threonyl-[protein] + ADP + H(+). Kinase activity is stimulated by cell-cycle specific phosphorylation. Serine/threonine-protein kinase component of the chromosomal passenger complex (CPC), a complex that acts as a key regulator of mitosis. The CPC complex has essential functions at the centromere in ensuring correct chromosome alignment and segregation and is required for chromatin-induced microtubule stabilization and spindle assembly. Involved in the bipolar attachment of spindle microtubules to kinetochores and is a key regulator for the onset of cytokinesis during mitosis. Required for central/midzone spindle assembly and cleavage furrow formation. Key component of the cytokinesis checkpoint, a process required to delay abscission to prevent both premature resolution of intercellular chromosome bridges and accumulation of DNA damage. Phosphorylates 'Ser-10' of histone H3 during mitosis. This Danio rerio (Zebrafish) protein is Aurora kinase B (aurkb).